A 585-amino-acid chain; its full sequence is Aspartate--tRNA ligase (585 aa).

Position 173 (E173) interacts with L-aspartate. Positions 197–200 (QTLK) are aspartate. Position 219 (R219) interacts with L-aspartate. Residues 219–221 (RDE) and Q228 each bind ATP. H446 provides a ligand contact to L-aspartate. Residue E480 participates in ATP binding. L-aspartate is bound at residue R487. 532–535 (GLDR) serves as a coordination point for ATP.

It belongs to the class-II aminoacyl-tRNA synthetase family. Type 1 subfamily. In terms of assembly, homodimer.

It localises to the cytoplasm. The enzyme catalyses tRNA(Asp) + L-aspartate + ATP = L-aspartyl-tRNA(Asp) + AMP + diphosphate. In terms of biological role, catalyzes the attachment of L-aspartate to tRNA(Asp) in a two-step reaction: L-aspartate is first activated by ATP to form Asp-AMP and then transferred to the acceptor end of tRNA(Asp). The polypeptide is Aspartate--tRNA ligase (Bacteroides fragilis (strain YCH46)).